The following is a 735-amino-acid chain: E3 UFM1-protein ligase 1 homolog (735 aa).

A disordered region spans residues 389 to 445; the sequence is RLEAEKKKQGGAKAAVKVQEETDDWGDGKKGGKGGKKNAKSVKGGSKSSAPSTSSNL. Over residues 419 to 428 the composition is skewed to basic residues; that stretch reads GGKGGKKNAK. Residues 429 to 445 show a composition bias toward low complexity; the sequence is SVKGGSKSSAPSTSSNL.

Belongs to the UFL1 family.

In terms of biological role, E3 UFM1-protein ligase that mediates ufmylation of target proteins. This Caenorhabditis elegans protein is E3 UFM1-protein ligase 1 homolog (ufl-1).